Here is a 778-residue protein sequence, read N- to C-terminus: Endonuclease MutS2 (778 aa).

An ATP-binding site is contributed by 328 to 335 (GPNTGGKT). Residues 703–778 (LDLRGKRYEE…GSGCTIANLG (76 aa)) enclose the Smr domain.

Belongs to the DNA mismatch repair MutS family. MutS2 subfamily. In terms of assembly, homodimer. Binds to stalled ribosomes, contacting rRNA.

Its function is as follows. Endonuclease that is involved in the suppression of homologous recombination and thus may have a key role in the control of bacterial genetic diversity. In terms of biological role, acts as a ribosome collision sensor, splitting the ribosome into its 2 subunits. Detects stalled/collided 70S ribosomes which it binds and splits by an ATP-hydrolysis driven conformational change. Acts upstream of the ribosome quality control system (RQC), a ribosome-associated complex that mediates the extraction of incompletely synthesized nascent chains from stalled ribosomes and their subsequent degradation. Probably generates substrates for RQC. The sequence is that of Endonuclease MutS2 from Streptococcus equi subsp. equi (strain 4047).